A 606-amino-acid chain; its full sequence is UvrABC system protein C (606 aa).

The 79-residue stretch at 19–97 folds into the GIY-YIG domain; the sequence is QSCGVYQMIG…IKSLKPPYNI (79 aa). The UVR domain occupies 207 to 242; that stretch reads EKVKKQLSSTMEKCSKEENYELAAIYRDRLKFLEQI.

The protein belongs to the UvrC family. In terms of assembly, interacts with UvrB in an incision complex.

It localises to the cytoplasm. Its function is as follows. The UvrABC repair system catalyzes the recognition and processing of DNA lesions. UvrC both incises the 5' and 3' sides of the lesion. The N-terminal half is responsible for the 3' incision and the C-terminal half is responsible for the 5' incision. The sequence is that of UvrABC system protein C from Wolbachia sp. subsp. Brugia malayi (strain TRS).